A 142-amino-acid polypeptide reads, in one-letter code: Phosphoribosyl-AMP cyclohydrolase (142 aa).

Asp-92 is a Mg(2+) binding site. Residue Cys-93 participates in Zn(2+) binding. Mg(2+) contacts are provided by Asp-94 and Asp-96. Positions 109 and 116 each coordinate Zn(2+).

This sequence belongs to the PRA-CH family. In terms of assembly, homodimer. Mg(2+) serves as cofactor. Requires Zn(2+) as cofactor.

The protein resides in the cytoplasm. It catalyses the reaction 1-(5-phospho-beta-D-ribosyl)-5'-AMP + H2O = 1-(5-phospho-beta-D-ribosyl)-5-[(5-phospho-beta-D-ribosylamino)methylideneamino]imidazole-4-carboxamide. The protein operates within amino-acid biosynthesis; L-histidine biosynthesis; L-histidine from 5-phospho-alpha-D-ribose 1-diphosphate: step 3/9. Catalyzes the hydrolysis of the adenine ring of phosphoribosyl-AMP. In Alkalilimnicola ehrlichii (strain ATCC BAA-1101 / DSM 17681 / MLHE-1), this protein is Phosphoribosyl-AMP cyclohydrolase.